We begin with the raw amino-acid sequence, 446 residues long: Exodeoxyribonuclease 7 large subunit (446 aa).

It belongs to the XseA family. As to quaternary structure, heterooligomer composed of large and small subunits.

The protein resides in the cytoplasm. It catalyses the reaction Exonucleolytic cleavage in either 5'- to 3'- or 3'- to 5'-direction to yield nucleoside 5'-phosphates.. Bidirectionally degrades single-stranded DNA into large acid-insoluble oligonucleotides, which are then degraded further into small acid-soluble oligonucleotides. The protein is Exodeoxyribonuclease 7 large subunit of Shewanella denitrificans (strain OS217 / ATCC BAA-1090 / DSM 15013).